Here is a 754-residue protein sequence, read N- to C-terminus: Gelsolin, cytoplasmic (754 aa).

The segment at 1–120 is actin-severing; that stretch reads MVPAFEGAGA…RYLKGGVASG (120 aa). A Gelsolin-like 1 repeat occupies 22–71; it reads FEVVPYPKEKYGQFYQGDSYIVLYTRDVNGNLSWDLHFWLGSETSQDEAG. The actin-actin interfilament contact point stretch occupies residues 68-71; that stretch reads DEAG. Residues 101–108 and 133–141 each bind a 1,2-diacyl-sn-glycero-3-phospho-(1D-myo-inositol-4,5-bisphosphate); these read LFLSRFKK and RLFHVKGRR. Residues 143-183 form a Gelsolin-like 2 repeat; the sequence is IRIRQVEVGVGSMNKGDCFILDCGSQVYAYMGPSSRKMDRL. Residues 209 to 238 are disordered; it reads TASGSEAGESSPGLGGGSPDDVADEDTGVD. A compositionally biased stretch (low complexity) spans 210 to 220; sequence ASGSEAGESSP. Gelsolin-like repeat units lie at residues 266 to 306, 414 to 463, 538 to 580, and 643 to 684; these read NMIG…KEKV, LKLE…DEKA, FDTR…EEKA, and LRVN…QEKE. The tract at residues 386–751 is actin-binding, Ca-sensitive; it reads LLQKNAGPAF…MKAQVPETNA (366 aa). 8 residues coordinate Ca(2+): G430, D431, E461, D556, E578, D659, D660, and E682.

It belongs to the villin/gelsolin family. In terms of tissue distribution, tail muscle.

The protein localises to the cytoplasm. Its subcellular location is the cytoskeleton. Functionally, calcium-regulated, actin-modulating protein that binds to the plus (or barbed) ends of actin monomers or filaments, preventing monomer exchange (end-blocking or capping). It can promote the assembly of monomers into filaments (nucleation) as well as sever filaments already formed. The polypeptide is Gelsolin, cytoplasmic (Homarus americanus (American lobster)).